A 923-amino-acid chain; its full sequence is Neuropilin-1 (923 aa).

The N-terminal stretch at Met1 to Ala21 is a signal peptide. At Phe22–Pro856 the chain is on the extracellular side. Intrachain disulfides connect Cys27–Cys54, Cys82–Cys104, and Cys147–Cys173. CUB domains follow at residues Cys27–Phe141 and Cys147–Leu265. An N-linked (GlcNAc...) asparagine glycan is attached at Asn150. Ca(2+) is bound by residues Glu195, Asp209, and Asp250. Residues Cys206 and Cys228 are joined by a disulfide bond. N-linked (GlcNAc...) asparagine glycans are attached at residues Asn261, Asn300, and Asn522. Cystine bridges form between Cys275–Cys424 and Cys431–Cys583. F5/8 type C domains follow at residues Cys275–Cys424 and Cys431–Cys583. Ser612 is a glycosylation site (O-linked (Xyl...) (chondroitin sulfate) serine; alternate). An O-linked (Xyl...) (heparan sulfate) serine; alternate glycan is attached at Ser612. The MAM domain maps to Thr645 to Lys811. Residues Thr820–Arg845 form a disordered region. Ser829 carries O-linked (Xyl...) (chondroitin sulfate) serine glycosylation. Asn842 is a glycosylation site (N-linked (GlcNAc...) asparagine). The helical transmembrane segment at Ile857–Leu879 threads the bilayer. The Cytoplasmic portion of the chain corresponds to Tyr880–Ala923. The residue at position 894 (Ser894) is a Phosphoserine.

The protein belongs to the neuropilin family. As to quaternary structure, homodimer, and heterodimer with NRP2. Binds PLXNB1. Interacts with FER. Interacts with VEGFA. Interacts with ABCB8/MITOSUR in mitochondria. As to expression, nervous system.

The protein resides in the mitochondrion membrane. It localises to the cell membrane. Its subcellular location is the cytoplasm. Receptor involved in the development of the cardiovascular system, in angiogenesis, in the formation of certain neuronal circuits and in organogenesis outside the nervous system. Mediates the chemorepulsant activity of semaphorins. Recognizes a C-end rule (CendR) motif R/KXXR/K on its ligands which causes cellular internalization and vascular leakage. Binds to semaphorin 3A (SEMA3A), the PLGF-2 isoform of PGF, the VEGF165 isoform of VEGFA and VEGFB. Coexpression with KDR results in increased VEGF165 binding to KDR as well as increased chemotaxis. Regulates VEGF-induced angiogenesis. Binding to VEGFA initiates a signaling pathway needed for motor neuron axon guidance and cell body migration, including for the caudal migration of facial motor neurons from rhombomere 4 to rhombomere 6 during embryonic development. Regulates mitochondrial iron transport via interaction with ABCB8/MITOSUR. The protein is Neuropilin-1 of Mus musculus (Mouse).